The following is a 183-amino-acid chain: Holliday junction branch migration complex subunit RuvA (183 aa).

The tract at residues 1 to 64 is domain I; that stretch reads MVVGIEGIIT…EDSNKFYGFL (64 aa). The interval 65 to 139 is domain II; it reads DKDEQKMFEM…DTKTKLENVS (75 aa). Ser-139 is a region of interest (flexible linker). The tract at residues 139–183 is domain III; it reads SDDKSEALAALLTLGFKQEKIISVLASAQATGTSELIKEALKKLG.

Belongs to the RuvA family. As to quaternary structure, homotetramer. Forms an RuvA(8)-RuvB(12)-Holliday junction (HJ) complex. HJ DNA is sandwiched between 2 RuvA tetramers; dsDNA enters through RuvA and exits via RuvB. An RuvB hexamer assembles on each DNA strand where it exits the tetramer. Each RuvB hexamer is contacted by two RuvA subunits (via domain III) on 2 adjacent RuvB subunits; this complex drives branch migration. In the full resolvosome a probable DNA-RuvA(4)-RuvB(12)-RuvC(2) complex forms which resolves the HJ.

It localises to the cytoplasm. The RuvA-RuvB-RuvC complex processes Holliday junction (HJ) DNA during genetic recombination and DNA repair, while the RuvA-RuvB complex plays an important role in the rescue of blocked DNA replication forks via replication fork reversal (RFR). RuvA specifically binds to HJ cruciform DNA, conferring on it an open structure. The RuvB hexamer acts as an ATP-dependent pump, pulling dsDNA into and through the RuvAB complex. HJ branch migration allows RuvC to scan DNA until it finds its consensus sequence, where it cleaves and resolves the cruciform DNA. The chain is Holliday junction branch migration complex subunit RuvA from Campylobacter jejuni subsp. jejuni serotype O:23/36 (strain 81-176).